The primary structure comprises 230 residues: ATP synthase subunit a 1 (230 aa).

5 consecutive transmembrane segments (helical) span residues 20-40 (ATIVFSWLVMLILVLGSWLIT), 78-98 (FLPFIGTLFLFITMANLLTIF), 112-132 (AALALCVFVAVPIYGIKNVGI), 174-194 (LLVAILISIVPLFFPAVMTLF), and 195-215 (GLLVGVIQAYVFTILAMVYIA).

The protein belongs to the ATPase A chain family. F-type ATPases have 2 components, CF(1) - the catalytic core - and CF(0) - the membrane proton channel. CF(1) has five subunits: alpha(3), beta(3), gamma(1), delta(1), epsilon(1). CF(0) has four main subunits: a, b, b' and c.

The protein localises to the cellular thylakoid membrane. In terms of biological role, key component of the proton channel; it plays a direct role in the translocation of protons across the membrane. This chain is ATP synthase subunit a 1, found in Crocosphaera subtropica (strain ATCC 51142 / BH68) (Cyanothece sp. (strain ATCC 51142)).